A 361-amino-acid polypeptide reads, in one-letter code: Aminomethyltransferase (361 aa).

This sequence belongs to the GcvT family. The glycine cleavage system is composed of four proteins: P, T, L and H.

It carries out the reaction N(6)-[(R)-S(8)-aminomethyldihydrolipoyl]-L-lysyl-[protein] + (6S)-5,6,7,8-tetrahydrofolate = N(6)-[(R)-dihydrolipoyl]-L-lysyl-[protein] + (6R)-5,10-methylene-5,6,7,8-tetrahydrofolate + NH4(+). Its function is as follows. The glycine cleavage system catalyzes the degradation of glycine. The polypeptide is Aminomethyltransferase (Phocaeicola vulgatus (strain ATCC 8482 / DSM 1447 / JCM 5826 / CCUG 4940 / NBRC 14291 / NCTC 11154) (Bacteroides vulgatus)).